Consider the following 383-residue polypeptide: Creatine kinase, testis isozyme (383 aa).

Residues 14–100 (KRLSPEEEFP…LDPIIEDRHG (87 aa)) enclose the Phosphagen kinase N-terminal domain. Over residues 99-112 (HGGYKPTDKHKTDL) the composition is skewed to basic and acidic residues. A disordered region spans residues 99–119 (HGGYKPTDKHKTDLNPDNLKG). The region spanning 127-369 (YVISSRVRTG…KLLVEMEKKL (243 aa)) is the Phosphagen kinase C-terminal domain. Residues 130–134 (SSRVR), histidine 193, arginine 238, arginine 294, 322–327 (RGTGGV), and aspartate 337 contribute to the ATP site.

Belongs to the ATP:guanido phosphotransferase family. In terms of tissue distribution, exists in many tissues, but preferentially in testis.

The catalysed reaction is creatine + ATP = N-phosphocreatine + ADP + H(+). Functionally, reversibly catalyzes the transfer of phosphate between ATP and various phosphogens (e.g. creatine phosphate). Creatine kinase isoenzymes play a central role in energy transduction in tissues with large, fluctuating energy demands, such as skeletal muscle, heart, brain and spermatozoa. The sequence is that of Creatine kinase, testis isozyme (tck1) from Oncorhynchus mykiss (Rainbow trout).